A 268-amino-acid polypeptide reads, in one-letter code: Small ribosomal subunit protein uS2 (268 aa).

The protein belongs to the universal ribosomal protein uS2 family.

This chain is Small ribosomal subunit protein uS2, found in Coprothermobacter proteolyticus (strain ATCC 35245 / DSM 5265 / OCM 4 / BT).